The following is a 359-amino-acid chain: Lactosylceramide 4-alpha-galactosyltransferase (359 aa).

Over Met1–Arg30 the chain is Cytoplasmic. Residues Val31 to Trp51 form a helical; Signal-anchor for type II membrane protein membrane-spanning segment. At His52–Leu359 the chain is on the lumenal side. The short motif at Asp198–Asp200 is the DXD motif element. Asn209 and Asn315 each carry an N-linked (GlcNAc...) asparagine glycan.

It belongs to the glycosyltransferase 32 family.

Its subcellular location is the golgi apparatus membrane. The catalysed reaction is a beta-D-Gal-(1-&gt;4)-beta-D-Glc-(1&lt;-&gt;1)-Cer(d18:1(4E)) + UDP-alpha-D-galactose = a globoside Gb3Cer (d18:1(4E)) + UDP + H(+). It catalyses the reaction a beta-D-Gal-(1&lt;-&gt;1')-ceramide + UDP-alpha-D-galactose = alpha-D-Gal-(1-&gt;4)-beta-D-Gal-(1&lt;-&gt;1')-Cer + UDP + H(+). It functions in the pathway glycolipid biosynthesis. In terms of biological role, catalyzes the transfer of galactose from UDP-alpha-D-galactose to lactosylceramide/beta-D-galactosyl-(1-&gt;4)-beta-D-glucosyl-(1&lt;-&gt;1)-ceramide(d18:1(4E)) to produce globotriaosylceramide/globoside Gb3Cer (d18:1(4E)). Also able to transfer galactose to galactosylceramide/beta-D-Gal-(1&lt;-&gt;1')-Cer. Globoside Gb3Cer is a glycosphingolipid of the globo serie, one of the major types of neutral root structures of glycosphingolipids, that constitute a significant portion of mammalian cell membranes. The polypeptide is Lactosylceramide 4-alpha-galactosyltransferase (Mus musculus (Mouse)).